A 577-amino-acid polypeptide reads, in one-letter code: Efflux pump notK' (577 aa).

Residues Asn-62 and Asn-84 are each glycosylated (N-linked (GlcNAc...) asparagine). Transmembrane regions (helical) follow at residues 104–124 (AAIA…PVAL), 151–171 (LAVT…MLGI), 189–209 (AGIG…LGLV), 241–261 (NPTM…LMMY), and 265–285 (GAVI…TTPV). Asn-320 carries an N-linked (GlcNAc...) asparagine glycan. Transmembrane regions (helical) follow at residues 328–348 (FGLA…GTLY), 373–393 (VDAI…TAFV), 413–433 (GICF…PPWA), 434–454 (TGST…EINW), and 476–496 (IADG…GVWV). The span at 555 to 566 (MPPNGSMSSGSP) shows a compositional bias: low complexity. Positions 555-577 (MPPNGSMSSGSPEQVAEKAVGKY) are disordered. Asn-558 carries N-linked (GlcNAc...) asparagine glycosylation.

It belongs to the nucleobase:cation symporter-2 (NCS2) (TC 2.A.40) family. Azg-like subfamily.

The protein localises to the cell membrane. In terms of biological role, efflux pump; part of the gene cluster that mediates the biosynthesis of notoamide, a fungal indole alkaloid that belongs to a family of natural products containing a characteristic bicyclo[2.2.2]diazaoctane core. The chain is Efflux pump notK' from Aspergillus versicolor.